Consider the following 201-residue polypeptide: Superoxide dismutase [Mn] (201 aa).

Residues H27, H81, D163, and H167 each contribute to the Mn(2+) site.

The protein belongs to the iron/manganese superoxide dismutase family. Homodimer. The cofactor is Mn(2+).

It localises to the secreted. The catalysed reaction is 2 superoxide + 2 H(+) = H2O2 + O2. Its function is as follows. Destroys superoxide anion radicals which are normally produced within the cells and which are toxic to biological systems. This is Superoxide dismutase [Mn] (sodA) from Streptococcus pyogenes serotype M1.